The chain runs to 439 residues: Proline--tRNA ligase (439 aa).

Belongs to the class-II aminoacyl-tRNA synthetase family. ProS type 2 subfamily. In terms of assembly, homodimer.

The protein resides in the cytoplasm. The enzyme catalyses tRNA(Pro) + L-proline + ATP = L-prolyl-tRNA(Pro) + AMP + diphosphate. Its function is as follows. Catalyzes the attachment of proline to tRNA(Pro) in a two-step reaction: proline is first activated by ATP to form Pro-AMP and then transferred to the acceptor end of tRNA(Pro). This is Proline--tRNA ligase from Parvibaculum lavamentivorans (strain DS-1 / DSM 13023 / NCIMB 13966).